The primary structure comprises 311 residues: Olfactory receptor 10G4 (311 aa).

Over 1 to 23 (MSNASLVTAFILTGLPHAPGLDA) the chain is Extracellular. Asn-3 carries N-linked (GlcNAc...) asparagine glycosylation. A helical membrane pass occupies residues 24 to 44 (LLFGIFLVVYVLTVLGNLLIL). Topologically, residues 45–52 (LVIRVDSH) are cytoplasmic. Residues 53–73 (LHTPMYYFLTNLSFIDMWFST) form a helical membrane-spanning segment. The Extracellular portion of the chain corresponds to 74–98 (VTVPKMLMTLVSPSGRAISFHSCVA). Cysteines 96 and 188 form a disulfide. Residues 99-119 (QLYFFHFLGSTECFLYTVMSY) traverse the membrane as a helical segment. The Cytoplasmic segment spans residues 120-138 (DRYLAISYPLRYTSMMSGS). Residues 139–159 (RCALLATGTWLSGSLHSAVQT) form a helical membrane-spanning segment. Over 160-196 (ILTFHLPYCGPNQIQHYFCDAPPILKLACADTSANVM) the chain is Extracellular. A helical transmembrane segment spans residues 197–216 (VIFVDIGIVASGCFVLIVLS). At 217-236 (YVSIVCSILRIRTSDGRRRA) the chain is on the cytoplasmic side. Residues 237 to 257 (FQTCASHCIVVLCFFVPCVVI) traverse the membrane as a helical segment. Residues 258-268 (YLRPGSMDAMD) are Extracellular-facing. The chain crosses the membrane as a helical span at residues 269–289 (GVVAIFYTVLTPLLNPVVYTL). Topologically, residues 290–311 (RNKEVKKAVLKLRDKVAHPQRK) are cytoplasmic.

It belongs to the G-protein coupled receptor 1 family.

The protein localises to the cell membrane. Functionally, odorant receptor. The polypeptide is Olfactory receptor 10G4 (OR10G4) (Homo sapiens (Human)).